Here is a 373-residue protein sequence, read N- to C-terminus: MPGWSCLVTGAGGFVGQRIIRMLVQEKELQEVRALDKVFRPETKEEFSKLQTKAKVTMLEGDILDAQYLRRACQGISVVIHTASVMDFSRVLPRQTILDVNLKGTQNLLEAGIHASVPAFIYCSTVDVAGPNSYKKTILNGREEEHHESTWSNPYPYSKKMAEKAVLAANGSILKNGGTLHTCALRPMYIYGERGQFLSRIIIMALKNKGVLNVTGKFSIVNPVYVGNVAWAHILAARGLRDPKKSQNIQGQFYYISDDTPHQSYDDLNCTLSKEWGLRLDSSWSLPLPLLYWLAFLLETVSFLLRPFYNYRPPFNCHLVTLSNSKFTFSYKKAQRDLGYEPLVSWEEAKQKTSEWIGTLVEQHRETLDTKSQ.

The Proton acceptor role is filled by tyrosine 155. Position 159 (lysine 159) interacts with NAD(+). A helical transmembrane segment spans residues 288 to 308 (LPLLYWLAFLLETVSFLLRPF).

This sequence belongs to the 3-beta-HSD family. In terms of tissue distribution, adrenal glands, testes and ovaries.

It localises to the endoplasmic reticulum membrane. The protein localises to the mitochondrion membrane. It carries out the reaction a 3beta-hydroxy-Delta(5)-steroid + NAD(+) = a 3-oxo-Delta(5)-steroid + NADH + H(+). The catalysed reaction is a 3-oxo-Delta(5)-steroid = a 3-oxo-Delta(4)-steroid. It functions in the pathway lipid metabolism; steroid biosynthesis. Its function is as follows. 3-beta-HSD is a bifunctional enzyme, that catalyzes the oxidative conversion of Delta(5)-ene-3-beta-hydroxy steroid, and the oxidative conversion of ketosteroids. The 3-beta-HSD enzymatic system plays a crucial role in the biosynthesis of all classes of hormonal steroids. The sequence is that of 3 beta-hydroxysteroid dehydrogenase/Delta 5--&gt;4-isomerase type 2 (Hsd3b) from Rattus norvegicus (Rat).